Consider the following 314-residue polypeptide: 4-hydroxy-3-methylbut-2-enyl diphosphate reductase (314 aa).

Cys12 is a binding site for [4Fe-4S] cluster. Residues His41 and His74 each contribute to the (2E)-4-hydroxy-3-methylbut-2-enyl diphosphate site. Positions 41 and 74 each coordinate dimethylallyl diphosphate. Isopentenyl diphosphate is bound by residues His41 and His74. A [4Fe-4S] cluster-binding site is contributed by Cys96. His124 is a binding site for (2E)-4-hydroxy-3-methylbut-2-enyl diphosphate. A dimethylallyl diphosphate-binding site is contributed by His124. Residue His124 coordinates isopentenyl diphosphate. Glu126 functions as the Proton donor in the catalytic mechanism. (2E)-4-hydroxy-3-methylbut-2-enyl diphosphate is bound at residue Thr167. Cys197 contacts [4Fe-4S] cluster. Residues Ser225, Ser226, Asn227, and Ser269 each contribute to the (2E)-4-hydroxy-3-methylbut-2-enyl diphosphate site. The dimethylallyl diphosphate site is built by Ser225, Ser226, Asn227, and Ser269. The isopentenyl diphosphate site is built by Ser225, Ser226, Asn227, and Ser269.

The protein belongs to the IspH family. [4Fe-4S] cluster serves as cofactor.

It carries out the reaction isopentenyl diphosphate + 2 oxidized [2Fe-2S]-[ferredoxin] + H2O = (2E)-4-hydroxy-3-methylbut-2-enyl diphosphate + 2 reduced [2Fe-2S]-[ferredoxin] + 2 H(+). It catalyses the reaction dimethylallyl diphosphate + 2 oxidized [2Fe-2S]-[ferredoxin] + H2O = (2E)-4-hydroxy-3-methylbut-2-enyl diphosphate + 2 reduced [2Fe-2S]-[ferredoxin] + 2 H(+). It participates in isoprenoid biosynthesis; dimethylallyl diphosphate biosynthesis; dimethylallyl diphosphate from (2E)-4-hydroxy-3-methylbutenyl diphosphate: step 1/1. Its pathway is isoprenoid biosynthesis; isopentenyl diphosphate biosynthesis via DXP pathway; isopentenyl diphosphate from 1-deoxy-D-xylulose 5-phosphate: step 6/6. Catalyzes the conversion of 1-hydroxy-2-methyl-2-(E)-butenyl 4-diphosphate (HMBPP) into a mixture of isopentenyl diphosphate (IPP) and dimethylallyl diphosphate (DMAPP). Acts in the terminal step of the DOXP/MEP pathway for isoprenoid precursor biosynthesis. This chain is 4-hydroxy-3-methylbut-2-enyl diphosphate reductase, found in Haemophilus influenzae (strain PittEE).